Consider the following 271-residue polypeptide: 4-hydroxy-tetrahydrodipicolinate reductase (271 aa).

NAD(+)-binding positions include 12 to 17 and Glu38; that span reads GGSGRM. Residue Arg39 coordinates NADP(+). NAD(+)-binding positions include 102–104 and 126–129; these read GTT and APNM. The Proton donor/acceptor role is filled by His159. His160 is a binding site for (S)-2,3,4,5-tetrahydrodipicolinate. Lys163 serves as the catalytic Proton donor. Residue 169-170 participates in (S)-2,3,4,5-tetrahydrodipicolinate binding; it reads GT.

The protein belongs to the DapB family.

The protein resides in the cytoplasm. The enzyme catalyses (S)-2,3,4,5-tetrahydrodipicolinate + NAD(+) + H2O = (2S,4S)-4-hydroxy-2,3,4,5-tetrahydrodipicolinate + NADH + H(+). The catalysed reaction is (S)-2,3,4,5-tetrahydrodipicolinate + NADP(+) + H2O = (2S,4S)-4-hydroxy-2,3,4,5-tetrahydrodipicolinate + NADPH + H(+). The protein operates within amino-acid biosynthesis; L-lysine biosynthesis via DAP pathway; (S)-tetrahydrodipicolinate from L-aspartate: step 4/4. Functionally, catalyzes the conversion of 4-hydroxy-tetrahydrodipicolinate (HTPA) to tetrahydrodipicolinate. This chain is 4-hydroxy-tetrahydrodipicolinate reductase, found in Shewanella sediminis (strain HAW-EB3).